Reading from the N-terminus, the 509-residue chain is MALLLIIPISLVTLWLGYTLYQRLRFKLPPGPRPWPVVGNLYDIKPVRFRCFAEWAQSYGPIISVWFGSTLNVIVSNSELAKEVLKEHDQLLADRHRSRSAAKFSRDGKDLIWADYGPHYVKVRKVCTLELFSPKRLEALRPIREDEVTSMVDSVYNHCTSTENLGKGILLRKHLGVVAFNNITRLAFGKRFVNSEGVMDEQGVEFKAIVENGLKLGASLAMAEHIPWLRWMFPLEEGAFAKHGARRDRLTRAIMAEHTEARKKSGGAKQHFVDALLTLQDKYDLSEDTIIGLLWDMITAGMDTTAISVEWAMAELIRNPRVQQKVQEELDRVIGLERVMTEADFSNLPYLQCVTKEAMRLHPPTPLMLPHRANANVKVGGYDIPKGSNVHVNVWAVARDPAVWKDPLEFRPERFLEEDVDMKGHDFRLLPFGSGRRVCPGAQLGINLAASMLGHLLHHFCWTPPEGMKPEEIDMGENPGLVTYMRTPIQAVVSPRLPSHLYKRVPAEI.

A helical transmembrane segment spans residues 2 to 21 (ALLLIIPISLVTLWLGYTLY). Cys-439 contributes to the heme binding site.

This sequence belongs to the cytochrome P450 family. Requires heme as cofactor.

The protein localises to the membrane. The polypeptide is Cytochrome P450 98A2 (CYP98A2) (Glycine max (Soybean)).